Here is a 146-residue protein sequence, read N- to C-terminus: Phospholipase A2, membrane associated (146 aa).

Residues 1 to 21 (MKVLLLLAASIMAFGSIQVQG) form the signal peptide. Cystine bridges form between Cys-47-Cys-139, Cys-49-Cys-65, Cys-64-Cys-119, Cys-70-Cys-146, Cys-71-Cys-112, Cys-80-Cys-105, and Cys-98-Cys-110. The Ca(2+) site is built by His-48, Gly-50, and Gly-52. His-68 is a catalytic residue. Position 69 (Asp-69) interacts with Ca(2+). The active site involves Asp-113.

This sequence belongs to the phospholipase A2 family. Requires Ca(2+) as cofactor. As to expression, mainly in the Paneth cells adjacent to the stem population in the small intestines.

It is found in the secreted. The protein resides in the cell membrane. Its subcellular location is the mitochondrion outer membrane. It carries out the reaction a 1,2-diacyl-sn-glycero-3-phosphoethanolamine + H2O = a 1-acyl-sn-glycero-3-phosphoethanolamine + a fatty acid + H(+). It catalyses the reaction 1-hexadecanoyl-2-(9Z-octadecenoyl)-sn-glycero-3-phosphoethanolamine + H2O = 1-hexadecanoyl-sn-glycero-3-phosphoethanolamine + (9Z)-octadecenoate + H(+). The catalysed reaction is 1-hexadecanoyl-2-(9Z,12Z-octadecadienoyl)-sn-glycero-3-phosphoethanolamine + H2O = 1-hexadecanoyl-sn-glycero-3-phosphoethanolamine + (9Z,12Z)-octadecadienoate + H(+). The enzyme catalyses 1-hexadecanoyl-2-(5Z,8Z,11Z,14Z-eicosatetraenoyl)-sn-glycero-3-phosphoethanolamine + H2O = 1-hexadecanoyl-sn-glycero-3-phosphoethanolamine + (5Z,8Z,11Z,14Z)-eicosatetraenoate + H(+). It carries out the reaction N-hexadecanoyl-1,2-di-(9Z-octadecenoyl)-sn-glycero-3-phosphoethanolamine + H2O = N-hexadecanoyl-1-(9Z-octadecenoyl)-sn-glycero-3-phosphoethanolamine + (9Z)-octadecenoate + H(+). It catalyses the reaction 1,2-dihexadecanoyl-sn-glycero-3-phospho-(1'-sn-glycerol) + H2O = 1-hexadecanoyl-sn-glycero-3-phospho-(1'-sn-glycerol) + hexadecanoate + H(+). The catalysed reaction is 1-hexadecanoyl-2-(9Z-octadecenoyl)-sn-glycero-3-phosphoglycerol + H2O = 1-hexadecanoyl-sn-glycero-3-phosphoglycerol + (9Z)-octadecenoate + H(+). The enzyme catalyses 1-hexadecanoyl-2-(9Z-octadecenoyl)-sn-glycero-3-phospho-(1'-sn-glycerol) + H2O = 1-hexadecanoyl-sn-glycero-3-phospho-(1'-sn-glycerol) + (9Z)-octadecenoate + H(+). It carries out the reaction a 1,2-diacyl-sn-glycero-3-phosphocholine + H2O = a 1-acyl-sn-glycero-3-phosphocholine + a fatty acid + H(+). It catalyses the reaction 1,2-dihexadecanoyl-sn-glycero-3-phosphocholine + H2O = 1-hexadecanoyl-sn-glycero-3-phosphocholine + hexadecanoate + H(+). The catalysed reaction is 1-hexadecanoyl-2-(9Z-octadecenoyl)-sn-glycero-3-phosphocholine + H2O = 1-hexadecanoyl-sn-glycero-3-phosphocholine + (9Z)-octadecenoate + H(+). The enzyme catalyses 1-hexadecanoyl-2-(9Z,12Z-octadecadienoyl)-sn-glycero-3-phosphocholine + H2O = (9Z,12Z)-octadecadienoate + 1-hexadecanoyl-sn-glycero-3-phosphocholine + H(+). It carries out the reaction 1-hexadecanoyl-2-(4Z,7Z,10Z,13Z,16Z,19Z-docosahexaenoyl)-sn-glycero-3-phosphocholine + H2O = (4Z,7Z,10Z,13Z,16Z,19Z)-docosahexaenoate + 1-hexadecanoyl-sn-glycero-3-phosphocholine + H(+). In terms of biological role, secretory calcium-dependent phospholipase A2 that primarily targets extracellular phospholipids with implications in host antimicrobial defense, inflammatory response and tissue regeneration. Hydrolyzes the ester bond of the fatty acyl group attached at sn-2 position of phospholipids (phospholipase A2 activity) with preference for phosphatidylethanolamines and phosphatidylglycerols over phosphatidylcholines. Contributes to lipid remodeling of cellular membranes and generation of lipid mediators involved in pathogen clearance. Displays bactericidal activity against Gram-positive bacteria by directly hydrolyzing phospholipids of the bacterial membrane. Upon sterile inflammation, targets membrane phospholipids of extracellular mitochondria released from activated platelets, generating free unsaturated fatty acids such as arachidonate that is used by neighboring leukocytes to synthesize inflammatory eicosanoids such as leukotrienes. Simultaneously, by compromising mitochondrial membrane integrity, promotes the release in circulation of potent damage-associated molecular pattern molecules that activate the innate immune response. Plays a stem cell regulator role in the intestinal crypt. Within intracellular compartment mediates Paneth cell differentiation and its stem cell supporting functions by inhibiting Wnt signaling pathway in intestinal stem cell (ICS). Secreted in the intestinal lumen upon inflammation, acts in an autocrine way and promotes prostaglandin E2 synthesis that stimulates Wnt signaling pathway in ICS cells and tissue regeneration. May play a role in the biosynthesis of N-acyl ethanolamines that regulate energy metabolism and inflammation. Hydrolyzes N-acyl phosphatidylethanolamines to N-acyl lysophosphatidylethanolamines, which are further cleaved by a lysophospholipase D to release N-acyl ethanolamines. Independent of its catalytic activity, acts as a ligand for integrins. Binds to and activates integrins ITGAV:ITGB3, ITGA4:ITGB1 and ITGA5:ITGB1. Binds to a site (site 2) which is distinct from the classical ligand-binding site (site 1) and induces integrin conformational changes and enhanced ligand binding to site 1. Induces cell proliferation in an integrin-dependent manner. The chain is Phospholipase A2, membrane associated (Pla2g2a) from Mus musculus (Mouse).